Reading from the N-terminus, the 116-residue chain is Holo-[acyl-carrier-protein] synthase (116 aa).

Residues Asp8 and Glu59 each coordinate Mg(2+).

Belongs to the P-Pant transferase superfamily. AcpS family. The cofactor is Mg(2+).

It localises to the cytoplasm. The catalysed reaction is apo-[ACP] + CoA = holo-[ACP] + adenosine 3',5'-bisphosphate + H(+). Functionally, transfers the 4'-phosphopantetheine moiety from coenzyme A to a Ser of acyl-carrier-protein. The chain is Holo-[acyl-carrier-protein] synthase from Staphylococcus saprophyticus subsp. saprophyticus (strain ATCC 15305 / DSM 20229 / NCIMB 8711 / NCTC 7292 / S-41).